A 163-amino-acid polypeptide reads, in one-letter code: Large ribosomal subunit protein bL19 (163 aa).

Over residues 131–150 the composition is skewed to basic and acidic residues; sequence ISQERKASGKDQASKPEVRP. The disordered stretch occupies residues 131 to 163; the sequence is ISQERKASGKDQASKPEVRPQGKKPAPKPKAKK. Positions 151 to 163 are enriched in basic residues; the sequence is QGKKPAPKPKAKK.

The protein belongs to the bacterial ribosomal protein bL19 family.

This protein is located at the 30S-50S ribosomal subunit interface and may play a role in the structure and function of the aminoacyl-tRNA binding site. The sequence is that of Large ribosomal subunit protein bL19 from Rhodospirillum rubrum (strain ATCC 11170 / ATH 1.1.1 / DSM 467 / LMG 4362 / NCIMB 8255 / S1).